Here is a 386-residue protein sequence, read N- to C-terminus: Glucose-1-phosphate adenylyltransferase (386 aa).

Alpha-D-glucose 1-phosphate is bound by residues Y99, G164, E179 to K180, and S190.

The protein belongs to the bacterial/plant glucose-1-phosphate adenylyltransferase family. In terms of assembly, homotetramer.

It catalyses the reaction alpha-D-glucose 1-phosphate + ATP + H(+) = ADP-alpha-D-glucose + diphosphate. The protein operates within glycan biosynthesis; glycogen biosynthesis. Functionally, involved in the biosynthesis of ADP-glucose, a building block required for the elongation reactions to produce glycogen. Catalyzes the reaction between ATP and alpha-D-glucose 1-phosphate (G1P) to produce pyrophosphate and ADP-Glc. This chain is Glucose-1-phosphate adenylyltransferase, found in Clostridioides difficile (strain 630) (Peptoclostridium difficile).